Here is a 369-residue protein sequence, read N- to C-terminus: Beta-1,4-galactosyltransferase 2 (369 aa).

The Cytoplasmic portion of the chain corresponds to Met-1–Ala-15. The chain crosses the membrane as a helical; Signal-anchor for type II membrane protein span at residues Val-16–Ala-36. Over Gln-37–Gly-369 the chain is Lumenal. Residues Ser-59–Gly-75 show a composition bias toward polar residues. The segment at Ser-59–Val-90 is disordered. Asn-63 and Asn-68 each carry an N-linked (GlcNAc...) asparagine glycan. Cysteines 94 and 136 form a disulfide. Residues Pro-147–Arg-151, Phe-186–Arg-188, Val-214–Asp-215, and Trp-275 each bind UDP-alpha-D-galactose. The cysteines at positions 208 and 227 are disulfide-linked. Asp-215 contributes to the Mn(2+) binding site. An N-acetyl-D-glucosamine-binding site is contributed by Gly-277–Asp-280. His-308 contacts Mn(2+). His-308–Arg-310 serves as a coordination point for UDP-alpha-D-galactose. Arg-320 lines the N-acetyl-D-glucosamine pocket. Asn-354 is a glycosylation site (N-linked (GlcNAc...) asparagine).

The protein belongs to the glycosyltransferase 7 family. Requires Mn(2+) as cofactor.

It is found in the golgi apparatus. Its subcellular location is the golgi stack membrane. The catalysed reaction is D-glucose + UDP-alpha-D-galactose = lactose + UDP + H(+). It catalyses the reaction an N-acetyl-beta-D-glucosaminyl derivative + UDP-alpha-D-galactose = a beta-D-galactosyl-(1-&gt;4)-N-acetyl-beta-D-glucosaminyl derivative + UDP + H(+). The enzyme catalyses N-acetyl-D-glucosamine + UDP-alpha-D-galactose = beta-D-galactosyl-(1-&gt;4)-N-acetyl-D-glucosamine + UDP + H(+). The protein operates within protein modification; protein glycosylation. In terms of biological role, responsible for the synthesis of complex-type N-linked oligosaccharides in many glycoproteins as well as the carbohydrate moieties of glycolipids. Can produce lactose. The polypeptide is Beta-1,4-galactosyltransferase 2 (B4GALT2) (Cricetulus griseus (Chinese hamster)).